Reading from the N-terminus, the 355-residue chain is Elongation factor Ts (355 aa).

The involved in Mg(2+) ion dislocation from EF-Tu stretch occupies residues 82–85 (TDFV).

It belongs to the EF-Ts family.

The protein resides in the cytoplasm. Associates with the EF-Tu.GDP complex and induces the exchange of GDP to GTP. It remains bound to the aminoacyl-tRNA.EF-Tu.GTP complex up to the GTP hydrolysis stage on the ribosome. The protein is Elongation factor Ts of Helicobacter pylori (strain HPAG1).